The following is a 47-amino-acid chain: Large ribosomal subunit protein bL32c (47 aa).

Belongs to the bacterial ribosomal protein bL32 family.

The protein localises to the plastid. In Prototheca wickerhamii, this protein is Large ribosomal subunit protein bL32c (rpl32).